The primary structure comprises 613 residues: MPIYRSATTTHGRNMAGARALWRATGVKDDDFGKPIIAVVNSFTQFVPGHVHLKDMGQLVAGEIEKAGGIAKEFNTIAVDDGIAMGHGGMLYSLPSRELIADSVEYMVNAHCADAMVCISNCDKITPGMMMAAMRLNIPVIFVSGGPMEAGKTKLSDQIIKLDLVDAMIQGADPTISDEQSEQVERSACPTCGSCSGMFTANSMNCLTEALGLSQPGNGSMLATHADREELFINAGKRIVDLTKRYYEQDDESALPRNIANRAAFDNAMALDIAMGGSSNTVLHLLAAAQEGDIDFDMGDIDEMSRRVPHLCKVAPSTPKYHMEDVHRAGGVMAILGELDRAGLLNNQTRTVLGLSMQEQLAQYDIMQTEDEAVLKFFRAGPAGIRTTKAFSQDCRWDRLDDDRKEGCIRTKENAFSQEGGLAVLSGNIAVDGCIVKTAGVDEENLKFQGPAIVFESQDTAVDGILAGKVKAGEVVVIRYEGPKGGPGMQEMLYPTTYLKSMGLGKSCALLTDGRFSGGTSGLSIGHASPEAASGGVIGLVNTGDIITIDIPSRSITLDVPEAELEARRVKQDALGWKPENRQREVSFALKAYASMATSADKGAVRDKSKLEG.

A Mg(2+)-binding site is contributed by aspartate 81. Cysteine 122 provides a ligand contact to [2Fe-2S] cluster. Mg(2+) is bound by residues aspartate 123 and lysine 124. At lysine 124 the chain carries N6-carboxylysine. A [2Fe-2S] cluster-binding site is contributed by cysteine 195. Glutamate 491 is a binding site for Mg(2+). Catalysis depends on serine 517, which acts as the Proton acceptor.

Belongs to the IlvD/Edd family. Homodimer. The cofactor is [2Fe-2S] cluster. Mg(2+) is required as a cofactor.

The catalysed reaction is (2R)-2,3-dihydroxy-3-methylbutanoate = 3-methyl-2-oxobutanoate + H2O. It carries out the reaction (2R,3R)-2,3-dihydroxy-3-methylpentanoate = (S)-3-methyl-2-oxopentanoate + H2O. It participates in amino-acid biosynthesis; L-isoleucine biosynthesis; L-isoleucine from 2-oxobutanoate: step 3/4. The protein operates within amino-acid biosynthesis; L-valine biosynthesis; L-valine from pyruvate: step 3/4. Functionally, functions in the biosynthesis of branched-chain amino acids. Catalyzes the dehydration of (2R,3R)-2,3-dihydroxy-3-methylpentanoate (2,3-dihydroxy-3-methylvalerate) into 2-oxo-3-methylpentanoate (2-oxo-3-methylvalerate) and of (2R)-2,3-dihydroxy-3-methylbutanoate (2,3-dihydroxyisovalerate) into 2-oxo-3-methylbutanoate (2-oxoisovalerate), the penultimate precursor to L-isoleucine and L-valine, respectively. This chain is Dihydroxy-acid dehydratase, found in Vibrio atlanticus (strain LGP32) (Vibrio splendidus (strain Mel32)).